The sequence spans 381 residues: Anhydro-N-acetylmuramic acid kinase (381 aa).

ATP is bound at residue 22–29 (GTSIDGID).

It belongs to the anhydro-N-acetylmuramic acid kinase family.

The catalysed reaction is 1,6-anhydro-N-acetyl-beta-muramate + ATP + H2O = N-acetyl-D-muramate 6-phosphate + ADP + H(+). It functions in the pathway amino-sugar metabolism; 1,6-anhydro-N-acetylmuramate degradation. Its pathway is cell wall biogenesis; peptidoglycan recycling. Its function is as follows. Catalyzes the specific phosphorylation of 1,6-anhydro-N-acetylmuramic acid (anhMurNAc) with the simultaneous cleavage of the 1,6-anhydro ring, generating MurNAc-6-P. Is required for the utilization of anhMurNAc either imported from the medium or derived from its own cell wall murein, and thus plays a role in cell wall recycling. The polypeptide is Anhydro-N-acetylmuramic acid kinase (Xylella fastidiosa (strain Temecula1 / ATCC 700964)).